A 70-amino-acid polypeptide reads, in one-letter code: DNA-directed RNA polymerase subunit epsilon (70 aa).

The protein belongs to the RNA polymerase subunit epsilon family. In terms of assembly, RNAP is composed of a core of 2 alpha, a beta and a beta' subunit. The core is associated with a delta subunit, and at least one of epsilon or omega. When a sigma factor is associated with the core the holoenzyme is formed, which can initiate transcription.

It catalyses the reaction RNA(n) + a ribonucleoside 5'-triphosphate = RNA(n+1) + diphosphate. A non-essential component of RNA polymerase (RNAP). In Bacillus cytotoxicus (strain DSM 22905 / CIP 110041 / 391-98 / NVH 391-98), this protein is DNA-directed RNA polymerase subunit epsilon.